The primary structure comprises 186 residues: Lipid A acyltransferase PagP (186 aa).

Positions 1 to 25 (MNVSKYVAIFSFVFIQLISVGKVFA) are cleaved as a signal peptide. Catalysis depends on residues H58, D101, and S102.

Belongs to the lipid A palmitoyltransferase family. As to quaternary structure, homodimer.

The protein localises to the cell outer membrane. It carries out the reaction a lipid A + a 1,2-diacyl-sn-glycero-3-phosphocholine = a hepta-acyl lipid A + a 2-acyl-sn-glycero-3-phosphocholine. The catalysed reaction is a lipid IVA + a 1,2-diacyl-sn-glycero-3-phosphocholine = a lipid IVB + a 2-acyl-sn-glycero-3-phosphocholine. The enzyme catalyses a lipid IIA + a 1,2-diacyl-sn-glycero-3-phosphocholine = a lipid IIB + a 2-acyl-sn-glycero-3-phosphocholine. Functionally, transfers a fatty acid residue from the sn-1 position of a phospholipid to the N-linked hydroxyfatty acid chain on the proximal unit of lipid A or its precursors. This chain is Lipid A acyltransferase PagP, found in Shigella flexneri serotype X (strain 2002017).